Consider the following 353-residue polypeptide: Protein RecA (353 aa).

Residue 75–82 (GPESSGKT) participates in ATP binding.

This sequence belongs to the RecA family.

It localises to the cytoplasm. Functionally, can catalyze the hydrolysis of ATP in the presence of single-stranded DNA, the ATP-dependent uptake of single-stranded DNA by duplex DNA, and the ATP-dependent hybridization of homologous single-stranded DNAs. It interacts with LexA causing its activation and leading to its autocatalytic cleavage. The chain is Protein RecA from Cupriavidus pinatubonensis (strain JMP 134 / LMG 1197) (Cupriavidus necator (strain JMP 134)).